Here is a 440-residue protein sequence, read N- to C-terminus: Putative sodium-coupled neutral amino acid transporter 8 (440 aa).

Transmembrane regions (helical) follow at residues 29–49 (AIFI…PWAF), 58–78 (AIMV…ILGY), 100–120 (IGKL…VAFL), 156–176 (FAIT…KEIS), 183–203 (ILGT…YYVM), 223–243 (MFSV…CVTI), 255–275 (WAAV…FTGI), 300–320 (VIIA…IILL), 350–370 (VVIT…VPDI), 373–393 (VISV…GLCL), and 418–438 (VVCG…EIIA).

This sequence belongs to the amino acid/polyamine transporter 2 family.

It is found in the membrane. In terms of biological role, putative sodium-dependent amino acid/proton antiporter. This chain is Putative sodium-coupled neutral amino acid transporter 8 (slc38a8), found in Xenopus tropicalis (Western clawed frog).